The chain runs to 314 residues: tRNA dimethylallyltransferase (314 aa).

12–19 (GPTASGKT) is an ATP binding site. Residue 14 to 19 (TASGKT) coordinates substrate. Interaction with substrate tRNA regions lie at residues 37–40 (DSAQ) and 161–165 (QRIQR).

It belongs to the IPP transferase family. Monomer. Mg(2+) serves as cofactor.

The enzyme catalyses adenosine(37) in tRNA + dimethylallyl diphosphate = N(6)-dimethylallyladenosine(37) in tRNA + diphosphate. In terms of biological role, catalyzes the transfer of a dimethylallyl group onto the adenine at position 37 in tRNAs that read codons beginning with uridine, leading to the formation of N6-(dimethylallyl)adenosine (i(6)A). This is tRNA dimethylallyltransferase from Nitrosococcus oceani (strain ATCC 19707 / BCRC 17464 / JCM 30415 / NCIMB 11848 / C-107).